A 142-amino-acid chain; its full sequence is Small ribosomal subunit protein uS9 (142 aa).

This sequence belongs to the universal ribosomal protein uS9 family.

The protein resides in the cytoplasm. This chain is Small ribosomal subunit protein uS9 (RPS16), found in Syntrichia ruralis (Great hairy screw-moss).